Consider the following 496-residue polypeptide: MKKYILSLDQGTTSSRAILFNKKGEIVHSAQKEFTQHFPKPGWVEHNAQEIWGSILAVIATCLSEADVKPEQIAGIGITNQRETAVVWDKTTGKPIYNAIVWQSRQTAEICDELKEKGYSEMVREKTGLLIDAYFSGTKVKWILDNVEGAREKAENGDLLFGTIDTWLVWKLSGGKAHVTDYSNASRTLMFNIHDLQWDDELLDMLTVPKSMLPEVRPSSEVYGETIDYHFFGQNVPIAGVAGDQQAALFGQACFGEGMAKNTYGTGCFMLMNTGEKAVASEHGLLTTIAWGIDGKVNYALEGSIFVAGSAIQWLRDGMRMFKDASESEVYASRVESTDGVYVVPAFVGLGTPYWDSEVRGAMFGVTRGTTKEHFIRATLESLAYQTKDVLCAMEADSGIELKTLRVDGGAVKNNFLMKFQSDILDVPVERPVINETTALGAAYLAGLAVGYWKNQDEIKEQWHMDKRFEPTMEAETSEELYAGWKKAIEATKAFK.

T12 serves as a coordination point for ADP. The ATP site is built by T12, T13, and S14. T12 is a binding site for sn-glycerol 3-phosphate. An ADP-binding site is contributed by R16. Residues R82, E83, and Y134 each contribute to the sn-glycerol 3-phosphate site. The glycerol site is built by R82, E83, and Y134. H230 carries the post-translational modification Phosphohistidine; by HPr. D244 provides a ligand contact to sn-glycerol 3-phosphate. Residues D244 and Q245 each coordinate glycerol. Positions 266 and 309 each coordinate ADP. 4 residues coordinate ATP: T266, G309, Q313, and G410. G410 and N414 together coordinate ADP.

It belongs to the FGGY kinase family. Homotetramer and homodimer (in equilibrium). The phosphoenolpyruvate-dependent sugar phosphotransferase system (PTS), including enzyme I, and histidine-containing protein (HPr) are required for the phosphorylation, which leads to the activation of the enzyme.

It catalyses the reaction glycerol + ATP = sn-glycerol 3-phosphate + ADP + H(+). Its pathway is polyol metabolism; glycerol degradation via glycerol kinase pathway; sn-glycerol 3-phosphate from glycerol: step 1/1. Its activity is regulated as follows. Activated by phosphorylation and inhibited by fructose 1,6-bisphosphate (FBP). Its function is as follows. Key enzyme in the regulation of glycerol uptake and metabolism. Catalyzes the phosphorylation of glycerol to yield sn-glycerol 3-phosphate. The protein is Glycerol kinase of Bacillus thuringiensis subsp. konkukian (strain 97-27).